A 108-amino-acid polypeptide reads, in one-letter code: Large ribosomal subunit protein uL24 (108 aa).

Belongs to the universal ribosomal protein uL24 family. In terms of assembly, part of the 50S ribosomal subunit.

In terms of biological role, one of two assembly initiator proteins, it binds directly to the 5'-end of the 23S rRNA, where it nucleates assembly of the 50S subunit. One of the proteins that surrounds the polypeptide exit tunnel on the outside of the subunit. This is Large ribosomal subunit protein uL24 from Mycoplasmopsis pulmonis (strain UAB CTIP) (Mycoplasma pulmonis).